The chain runs to 382 residues: LIM homeobox transcription factor 1-alpha (382 aa).

LIM zinc-binding domains are found at residues 33-92 and 92-154; these read SVCE…LFAV and VKCG…EREL. Disordered regions lie at residues 161-208 and 252-285; these read AASD…QQRR and KLAR…GMEG. The segment at residues 195–254 is a DNA-binding region (homeobox); it reads PKRPRTILTTQQRRAFKASFEVSSKPCRKVRETLAAETGLSVRVVQVWFQNQRAKMKKLA. Over residues 256 to 269 the composition is skewed to low complexity; sequence RQQQQQQDQQNTQR.

In terms of tissue distribution, isoform 1 is expressed in many tissues. Not found in heart, liver, spleen and testis. Relatively highly expressed in fetal brain. Isoform LMX1A-4AB is expressed in testis.

It localises to the nucleus. In terms of biological role, acts as a transcriptional activator by binding to an A/T-rich sequence, the FLAT element, in the insulin gene promoter. Required for development of the roof plate and, in turn, for specification of dorsal cell fates in the CNS and developing vertebrae. The protein is LIM homeobox transcription factor 1-alpha (LMX1A) of Homo sapiens (Human).